We begin with the raw amino-acid sequence, 225 residues long: Protein-L-isoaspartate O-methyltransferase (225 aa).

Ser75 is a catalytic residue.

The protein belongs to the methyltransferase superfamily. L-isoaspartyl/D-aspartyl protein methyltransferase family.

The protein resides in the cytoplasm. The enzyme catalyses [protein]-L-isoaspartate + S-adenosyl-L-methionine = [protein]-L-isoaspartate alpha-methyl ester + S-adenosyl-L-homocysteine. Catalyzes the methyl esterification of L-isoaspartyl residues in peptides and proteins that result from spontaneous decomposition of normal L-aspartyl and L-asparaginyl residues. It plays a role in the repair and/or degradation of damaged proteins. This Xanthomonas campestris pv. campestris (strain 8004) protein is Protein-L-isoaspartate O-methyltransferase.